The primary structure comprises 119 residues: Ribonuclease pancreatic (119 aa).

Residue Gln1 is modified to Pyrrolidone carboxylic acid. The active-site Proton acceptor is the His10. 3 disulfide bridges follow: Cys25/Cys80, Cys39/Cys91, and Cys57/Cys106. Residue 40–44 (KTRNT) participates in substrate binding. Residue His113 is the Proton donor of the active site.

This sequence belongs to the pancreatic ribonuclease family. Monomer. Interacts with and forms tight 1:1 complexes with RNH1. Dimerization of two such complexes may occur. Interaction with RNH1 inhibits this protein. In terms of tissue distribution, pancreas.

It is found in the secreted. It catalyses the reaction an [RNA] containing cytidine + H2O = an [RNA]-3'-cytidine-3'-phosphate + a 5'-hydroxy-ribonucleotide-3'-[RNA].. It carries out the reaction an [RNA] containing uridine + H2O = an [RNA]-3'-uridine-3'-phosphate + a 5'-hydroxy-ribonucleotide-3'-[RNA].. In terms of biological role, endonuclease that catalyzes the cleavage of RNA on the 3' side of pyrimidine nucleotides. Acts on single-stranded and double-stranded RNA. This Iguana iguana (Common iguana) protein is Ribonuclease pancreatic.